The sequence spans 134 residues: Nogalonic acid methyl ester cyclase (134 aa).

Gln95 is a nogalaviketone binding site. The active-site Proton donor/acceptor is Asp111.

Belongs to the polyketide cyclase DnrD family. In terms of assembly, homotetramer. Dimer of dimers.

It carries out the reaction nogalaviketone = methyl nogalonate. It participates in antibiotic biosynthesis. In terms of biological role, involved in the biosynthesis of the aromatic polyketide antibiotic nogalamycin. Catalyzes the formation of nogalaviketone from nogalonic acid methyl ester (NAME), the last ring-closure step in the biosynthesis of nogalamycin. The chain is Nogalonic acid methyl ester cyclase from Streptomyces nogalater.